Here is a 1070-residue protein sequence, read N- to C-terminus: DNA-directed RNA polymerase subunit beta (1070 aa).

Belongs to the RNA polymerase beta chain family. In terms of assembly, in plastids the minimal PEP RNA polymerase catalytic core is composed of four subunits: alpha, beta, beta', and beta''. When a (nuclear-encoded) sigma factor is associated with the core the holoenzyme is formed, which can initiate transcription.

The protein resides in the plastid. It localises to the chloroplast. It carries out the reaction RNA(n) + a ribonucleoside 5'-triphosphate = RNA(n+1) + diphosphate. DNA-dependent RNA polymerase catalyzes the transcription of DNA into RNA using the four ribonucleoside triphosphates as substrates. The polypeptide is DNA-directed RNA polymerase subunit beta (Buxus microphylla (Littleleaf boxwood)).